A 297-amino-acid polypeptide reads, in one-letter code: Virulence genes transcriptional activator (297 aa).

The HTH lysR-type domain maps to 1–61; sequence MDFLINKKLK…IRKNGTLIPT (61 aa). Positions 21 to 40 form a DNA-binding region, H-T-H motif; sequence FSIATSVLYITRTPLSRVIS.

This sequence belongs to the LysR transcriptional regulatory family.

It is found in the cytoplasm. Positive regulator for the plasmid-encoded virulence factors SpvA, SpvB, and SpvC. The protein is Virulence genes transcriptional activator (mkaC) of Salmonella typhimurium (strain LT2 / SGSC1412 / ATCC 700720).